A 485-amino-acid polypeptide reads, in one-letter code: GTPase Der (485 aa).

EngA-type G domains follow at residues 3-167 and 176-349; these read PTIA…PEPE and PVFA…NAAM. Residues 9 to 16, 56 to 60, 119 to 122, 182 to 189, 229 to 233, and 294 to 297 each bind GTP; these read GRPNVGKS, DTGGF, NKGE, DTAGV, and NKWD. The 85-residue stretch at 350-434 folds into the KH-like domain; the sequence is IKMPTPKITR…PLRIQYNVSE (85 aa). The interval 435-485 is disordered; the sequence is NPYENAEDKPKKKPLRRVSLSNRIEKREGRKEEKNRFKKKTKVSVKKQFSK. The segment covering 457–469 has biased composition (basic and acidic residues); the sequence is RIEKREGRKEEKN. A compositionally biased stretch (basic residues) spans 470–485; sequence RFKKKTKVSVKKQFSK.

The protein belongs to the TRAFAC class TrmE-Era-EngA-EngB-Septin-like GTPase superfamily. EngA (Der) GTPase family. Associates with the 50S ribosomal subunit.

In terms of biological role, GTPase that plays an essential role in the late steps of ribosome biogenesis. The sequence is that of GTPase Der from Neisseria meningitidis serogroup C / serotype 2a (strain ATCC 700532 / DSM 15464 / FAM18).